A 137-amino-acid polypeptide reads, in one-letter code: Urease subunit beta (137 aa).

The disordered stretch occupies residues 118–137 (IIAEENKVSENANKESGYNR). A compositionally biased stretch (polar residues) spans 126 to 137 (SENANKESGYNR).

Belongs to the urease beta subunit family. Heterotrimer of UreA (gamma), UreB (beta) and UreC (alpha) subunits. Three heterotrimers associate to form the active enzyme.

Its subcellular location is the cytoplasm. The catalysed reaction is urea + 2 H2O + H(+) = hydrogencarbonate + 2 NH4(+). It functions in the pathway nitrogen metabolism; urea degradation; CO(2) and NH(3) from urea (urease route): step 1/1. The protein is Urease subunit beta of Staphylococcus xylosus.